The primary structure comprises 183 residues: ATP synthase subunit delta (183 aa).

Belongs to the ATPase delta chain family. As to quaternary structure, F-type ATPases have 2 components, F(1) - the catalytic core - and F(0) - the membrane proton channel. F(1) has five subunits: alpha(3), beta(3), gamma(1), delta(1), epsilon(1). CF(0) has four main subunits: a(1), b(1), b'(1) and c(10-14). The alpha and beta chains form an alternating ring which encloses part of the gamma chain. F(1) is attached to F(0) by a central stalk formed by the gamma and epsilon chains, while a peripheral stalk is formed by the delta, b and b' chains.

It is found in the cellular thylakoid membrane. Functionally, f(1)F(0) ATP synthase produces ATP from ADP in the presence of a proton or sodium gradient. F-type ATPases consist of two structural domains, F(1) containing the extramembraneous catalytic core and F(0) containing the membrane proton channel, linked together by a central stalk and a peripheral stalk. During catalysis, ATP synthesis in the catalytic domain of F(1) is coupled via a rotary mechanism of the central stalk subunits to proton translocation. This protein is part of the stalk that links CF(0) to CF(1). It either transmits conformational changes from CF(0) to CF(1) or is implicated in proton conduction. The sequence is that of ATP synthase subunit delta from Trichormus variabilis (strain ATCC 29413 / PCC 7937) (Anabaena variabilis).